Here is a 2279-residue protein sequence, read N- to C-terminus: Zinc finger protein 318 (2279 aa).

2 stretches are compositionally biased toward low complexity: residues 1-12 (MYRSSARSSVSS) and 25-39 (SGRSSGSSSGPARRS). Disordered regions lie at residues 1 to 140 (MYRS…PGLC) and 164 to 189 (RRRLSDRLGSPVDNLEDMDRDDLTDD). The interval 1-1092 (MYRSSARSSV…THMHNKKHTQ (1092 aa)) is interaction with AR. Ser-40 carries the phosphoserine modification. Residues 53–67 (PARRPRSPSGHRGRR) are compositionally biased toward basic residues. Phosphoserine occurs at positions 79 and 81. Over residues 110–132 (SRGESRADYARDGRGDHPGDSGS) the composition is skewed to basic and acidic residues. Phosphoserine occurs at positions 136 and 173. The segment covering 177 to 188 (NLEDMDRDDLTD) has biased composition (acidic residues). Tyr-205 is subject to Phosphotyrosine. A phosphoserine mark is found at Ser-207 and Ser-214. Disordered stretches follow at residues 279 to 346 (TVKI…DGGG) and 397 to 416 (LESFSSSTSSSQDHPLYSGH). Positions 311–333 (LDPEFRELDLARRKREEEEERSR) are enriched in basic and acidic residues. The stretch at 315-343 (FRELDLARRKREEEEERSRSLSQELVGVD) forms a coiled coil. Residues Ser-464, Ser-472, Ser-501, and Ser-527 each carry the phosphoserine modification. 2 disordered regions span residues 514-533 (LADSTSTQEKRRRSFPDIED) and 540-570 (GDEEEDLKAESVPKPLGSSESEVMRQKASSL). Glycyl lysine isopeptide (Lys-Gly) (interchain with G-Cter in SUMO2) cross-links involve residues Lys-547, Lys-553, Lys-566, and Lys-578. Positions 664–683 (FSADRRSSDPHRLESREAHH) are enriched in basic and acidic residues. The tract at residues 664–709 (FSADRRSSDPHRLESREAHHSNTHSPEVSHPHPPSPVDPYLLTKNS) is disordered. Thr-842 carries the post-translational modification Phosphothreonine. Positions 876 to 980 (EKISDEKNRA…SELDKVAQIL (105 aa)) form a coiled coil. Basic and acidic residues-rich tracts occupy residues 922-941 (QQGEMLRKKRREKDGHKDPL) and 989-1012 (QKSLSDSREPTEKPGKAEKSKSPE). 2 disordered regions span residues 922–942 (QQGEMLRKKRREKDGHKDPLL) and 989–1051 (QKSL…TKQL). Ser-1010 bears the Phosphoserine mark. A compositionally biased stretch (low complexity) spans 1013–1023 (KVSSFSNSSSN). Over residues 1024–1034 (KESKVNNEKFR) the composition is skewed to basic and acidic residues. A Phosphoserine modification is found at Ser-1037. 2 Matrin-type zinc fingers span residues 1063–1097 (AGNHWCKDCNTICGTMFDFFTHMHNKKHTQTLDPY) and 1136–1166 (FYCQLCEEFLGDPISGEQHVKGHQHNEKYKK). Composition is skewed to basic and acidic residues over residues 1195 to 1235 (RRQS…KLED), 1242 to 1251 (NSPEKAENKR), 1258 to 1267 (QLKEEVKKES), 1279 to 1288 (KKPEKEEEKS), and 1296 to 1316 (SKEEILESSKDKEDGKTEAGK). Residues 1195–1319 (RRQSELKRKL…GKTEAGKAKP (125 aa)) form a disordered region. Ser-1243 and Ser-1267 each carry phosphoserine. At Ser-1420 the chain carries Phosphoserine. Disordered regions lie at residues 1428–1463 (AEKSEPSHLPEQILPPPPPPPPPPPPPPPVIPHPAA), 1577–1628 (GKGA…EELH), 1702–1735 (SSFQSDTSRDISPEKSELDLGEPGPPGVEPPPQL), and 1753–1775 (ESVNQDKESQELRKSEDCRESEI). The span at 1440–1462 (ILPPPPPPPPPPPPPPPVIPHPA) shows a compositional bias: pro residues. The segment covering 1602 to 1623 (SNLSRTKSSDTSSTSPLNSSAS) has biased composition (low complexity). Residues 1708 to 1719 (TSRDISPEKSEL) show a composition bias toward basic and acidic residues. Residue Ser-1713 is modified to Phosphoserine. Pro residues predominate over residues 1724 to 1734 (PGPPGVEPPPQ). Positions 1768-1792 (EDCRESEIETNTELKERVKELSEGI) form a coiled coil. Residues Ser-1856, Ser-1896, Ser-1971, Ser-2030, Ser-2035, Ser-2091, Ser-2101, Ser-2189, Ser-2192, and Ser-2243 each carry the phosphoserine modification. Residues 2252-2279 (DNMVPQGMPEQETTVGAIQDHTESSVHN) are disordered.

Homodimer. Heterodimer of isoform 1 and isoform 2. Isoform 1 and isoform 2 interact with AR. In terms of tissue distribution, expressed in endocrine tissue.

The protein resides in the nucleus. Functionally, acts as a transcriptional corepressor for AR-mediated transactivation function. May act as a transcriptional regulator during spermatogenesis and, in particular, during meiotic division. Acts as a transcriptional coactivator for AR-mediated transactivation function. May act as a transcriptional regulator during spermatogenesis and, in particular, during meiotic division. This Homo sapiens (Human) protein is Zinc finger protein 318 (ZNF318).